The following is a 436-amino-acid chain: Methylenetetrahydrofolate--tRNA-(uracil-5-)-methyltransferase TrmFO (436 aa).

Position 9 to 14 (9 to 14 (GAGLAG)) interacts with FAD.

Belongs to the MnmG family. TrmFO subfamily. FAD serves as cofactor.

The protein resides in the cytoplasm. The enzyme catalyses uridine(54) in tRNA + (6R)-5,10-methylene-5,6,7,8-tetrahydrofolate + NADH + H(+) = 5-methyluridine(54) in tRNA + (6S)-5,6,7,8-tetrahydrofolate + NAD(+). It catalyses the reaction uridine(54) in tRNA + (6R)-5,10-methylene-5,6,7,8-tetrahydrofolate + NADPH + H(+) = 5-methyluridine(54) in tRNA + (6S)-5,6,7,8-tetrahydrofolate + NADP(+). Catalyzes the folate-dependent formation of 5-methyl-uridine at position 54 (M-5-U54) in all tRNAs. This is Methylenetetrahydrofolate--tRNA-(uracil-5-)-methyltransferase TrmFO from Ligilactobacillus salivarius (strain UCC118) (Lactobacillus salivarius).